We begin with the raw amino-acid sequence, 122 residues long: Large ribosomal subunit protein bL12 (122 aa).

It belongs to the bacterial ribosomal protein bL12 family. As to quaternary structure, homodimer. Part of the ribosomal stalk of the 50S ribosomal subunit. Forms a multimeric L10(L12)X complex, where L10 forms an elongated spine to which 2 to 4 L12 dimers bind in a sequential fashion. Binds GTP-bound translation factors.

Functionally, forms part of the ribosomal stalk which helps the ribosome interact with GTP-bound translation factors. Is thus essential for accurate translation. The sequence is that of Large ribosomal subunit protein bL12 from Sodalis glossinidius (strain morsitans).